A 398-amino-acid polypeptide reads, in one-letter code: Ribosomal RNA large subunit methyltransferase I (398 aa).

The region spanning 2 to 79 (SVRLVLAKGR…LSESIDIAFF (78 aa)) is the PUA domain.

This sequence belongs to the methyltransferase superfamily. RlmI family.

The protein localises to the cytoplasm. The catalysed reaction is cytidine(1962) in 23S rRNA + S-adenosyl-L-methionine = 5-methylcytidine(1962) in 23S rRNA + S-adenosyl-L-homocysteine + H(+). Its function is as follows. Specifically methylates the cytosine at position 1962 (m5C1962) of 23S rRNA. The polypeptide is Ribosomal RNA large subunit methyltransferase I (Shigella dysenteriae serotype 1 (strain Sd197)).